We begin with the raw amino-acid sequence, 353 residues long: Fe(3+) ions import ATP-binding protein FbpC (353 aa).

One can recognise an ABC transporter domain in the interval 9–239; that stretch reads VVFENVRKTF…PASSFIADFM (231 aa). 41 to 48 lines the ATP pocket; sequence GPSGCGKT.

The protein belongs to the ABC transporter superfamily. Fe(3+) ion importer (TC 3.A.1.10) family. In terms of assembly, the complex is composed of two ATP-binding proteins (FbpC), two transmembrane proteins (FbpB) and a solute-binding protein (FbpA).

The protein resides in the cell inner membrane. It carries out the reaction Fe(3+)(out) + ATP + H2O = Fe(3+)(in) + ADP + phosphate + H(+). Part of the ABC transporter complex FbpABC involved in Fe(3+) ions import. Responsible for energy coupling to the transport system. The polypeptide is Fe(3+) ions import ATP-binding protein FbpC (Agrobacterium fabrum (strain C58 / ATCC 33970) (Agrobacterium tumefaciens (strain C58))).